Here is a 97-residue protein sequence, read N- to C-terminus: MTSSPVSRVVYNGKRNSSHRSPPNSSEIFTPAHEENVRFIYEAWQGVERDLRSQMSGSERGLVEEYVEKVPNPSLKTFRPIDLSDLKRRNTQDAKKS.

The interval 1 to 30 (MTSSPVSRVVYNGKRNSSHRSPPNSSEIFT) is disordered. Position 21 is a phosphoserine (serine 21). Threonine 30 bears the Phosphothreonine mark. Tyrosine 41 carries the post-translational modification Phosphotyrosine. The disordered stretch occupies residues 77-97 (TFRPIDLSDLKRRNTQDAKKS). A PXDLS motif motif is present at residues 80–84 (PIDLS). Basic and acidic residues predominate over residues 82-97 (DLSDLKRRNTQDAKKS).

It belongs to the MCRIP family. As to quaternary structure, interacts (unphosphorylated form, via the PXDLS motif) with CTBP1, competitively inhibiting CTBP-ZEB1 interaction. Interacts with CTBP2. Interacts with MCRIP2. Interacts with DDX6. Phosphorylation by MAPK3/1 (ERK1/2) regulates MCRIP1 binding to CTBP(s).

The protein localises to the nucleus. It localises to the cytoplasm. Its subcellular location is the stress granule. Its function is as follows. The phosphorylation status of MCRIP1 functions as a molecular switch to regulate epithelial-mesenchymal transition. Unphosphorylated MCRIP1 binds to and inhibits the transcriptional corepressor CTBP(s). When phosphorylated by MAPK/ERK, MCRIP1 releases CTBP(s) resulting in transcriptional silencing of the E-cadherin gene and induction of epithelial-mesenchymal transition. This is Mapk-regulated corepressor-interacting protein 1 (MCRIP1) from Bos taurus (Bovine).